A 582-amino-acid polypeptide reads, in one-letter code: Choline kinase (582 aa).

The segment at 1-36 is disordered; the sequence is MVQESRPGSVRSYSVGYQARSRSSSQRRHSLTRQRS. Ser30 is subject to Phosphoserine; by PKA. Ser48 and Ser51 each carry phosphoserine. Thr54 carries the phosphothreonine modification. Ser85 bears the Phosphoserine; by PKA mark.

It belongs to the choline/ethanolamine kinase family. As to quaternary structure, monomer. Interacts with NAP1. It depends on Mg(2+) as a cofactor.

It localises to the cytoplasm. It carries out the reaction choline + ATP = phosphocholine + ADP + H(+). The enzyme catalyses ethanolamine + ATP = phosphoethanolamine + ADP + H(+). The protein operates within phospholipid metabolism; phosphatidylcholine biosynthesis; phosphocholine from choline: step 1/1. Its function is as follows. Catalyzes the committed step in the synthesis of phosphatidylcholine by the CDP-choline pathway. Also exhibits ethanolamine kinase activity but it is a poor substrate at 14% efficiency compared with choline. This Saccharomyces cerevisiae (strain ATCC 204508 / S288c) (Baker's yeast) protein is Choline kinase.